A 743-amino-acid polypeptide reads, in one-letter code: Polyribonucleotide nucleotidyltransferase (743 aa).

Residues Asp494 and Asp500 each contribute to the Mg(2+) site. Residues 561–620 enclose the KH domain; it reads PQHAEVFVNPDIIRLIIGPGGKNIKAITAATGASVDIEDSGRVSIFAPTAEALEKAREMV. In terms of domain architecture, S1 motif spans 630–704; that stretch reads GKNYNAKVRK…SRKAVLLEEQ (75 aa). The interval 702–743 is disordered; that stretch reads EEQGHPWNPEDTARPQRSDRGDRGDRRGDRGGRDRRDRGDRR. Over residues 712 to 743 the composition is skewed to basic and acidic residues; it reads DTARPQRSDRGDRGDRRGDRGGRDRRDRGDRR.

Belongs to the polyribonucleotide nucleotidyltransferase family. Requires Mg(2+) as cofactor.

It localises to the cytoplasm. It carries out the reaction RNA(n+1) + phosphate = RNA(n) + a ribonucleoside 5'-diphosphate. Functionally, involved in mRNA degradation. Catalyzes the phosphorolysis of single-stranded polyribonucleotides processively in the 3'- to 5'-direction. In Desulfovibrio desulfuricans (strain ATCC 27774 / DSM 6949 / MB), this protein is Polyribonucleotide nucleotidyltransferase.